Consider the following 185-residue polypeptide: Protein GrpE (185 aa).

The span at 1–20 (MSQEKKEELQSEAQVTKEET) shows a compositional bias: basic and acidic residues. Residues 1-28 (MSQEKKEELQSEAQVTKEETPQANEAAA) form a disordered region.

The protein belongs to the GrpE family. As to quaternary structure, homodimer.

It localises to the cytoplasm. Functionally, participates actively in the response to hyperosmotic and heat shock by preventing the aggregation of stress-denatured proteins, in association with DnaK and GrpE. It is the nucleotide exchange factor for DnaK and may function as a thermosensor. Unfolded proteins bind initially to DnaJ; upon interaction with the DnaJ-bound protein, DnaK hydrolyzes its bound ATP, resulting in the formation of a stable complex. GrpE releases ADP from DnaK; ATP binding to DnaK triggers the release of the substrate protein, thus completing the reaction cycle. Several rounds of ATP-dependent interactions between DnaJ, DnaK and GrpE are required for fully efficient folding. The chain is Protein GrpE from Sulfurimonas denitrificans (strain ATCC 33889 / DSM 1251) (Thiomicrospira denitrificans (strain ATCC 33889 / DSM 1251)).